Here is an 80-residue protein sequence, read N- to C-terminus: Defensin-like protein 46 (80 aa).

The N-terminal stretch at 1 to 27 (MGSTKTLVTCFLTIILAVSLSNHNVLA) is a signal peptide. 4 disulfide bridges follow: cysteine 40–cysteine 78, cysteine 44–cysteine 65, cysteine 50–cysteine 76, and cysteine 54–cysteine 77.

This sequence belongs to the DEFL family.

The protein localises to the secreted. The sequence is that of Defensin-like protein 46 from Arabidopsis thaliana (Mouse-ear cress).